A 425-amino-acid polypeptide reads, in one-letter code: Glutamate-1-semialdehyde 2,1-aminomutase (425 aa).

N6-(pyridoxal phosphate)lysine is present on Lys-265.

The protein belongs to the class-III pyridoxal-phosphate-dependent aminotransferase family. HemL subfamily. In terms of assembly, homodimer. The cofactor is pyridoxal 5'-phosphate.

It is found in the cytoplasm. The catalysed reaction is (S)-4-amino-5-oxopentanoate = 5-aminolevulinate. Its pathway is porphyrin-containing compound metabolism; protoporphyrin-IX biosynthesis; 5-aminolevulinate from L-glutamyl-tRNA(Glu): step 2/2. The protein is Glutamate-1-semialdehyde 2,1-aminomutase of Desulfatibacillum aliphaticivorans.